The primary structure comprises 153 residues: Ribosome maturation factor RimP (153 aa).

The protein belongs to the RimP family.

The protein localises to the cytoplasm. Its function is as follows. Required for maturation of 30S ribosomal subunits. This Clostridium botulinum (strain Kyoto / Type A2) protein is Ribosome maturation factor RimP.